The chain runs to 536 residues: MAERAGRRCCLGWDFSTQQVKVVAVDAELNVFYEDSVHFDRDLPEFGTQGGVHVHKDRLTVTSPVLMWVQALDLILEKMKASGFDFSQVLALSGAGQQHGSVYWKTGASLALSSLSPALLLHQQLQACFSVSDCPIWMDSSTTAQCHQLEAAVGGAQALSCLTGSRAYERFTGNQISKIFQKNPEAYSNSERISLVSSFAASLFLGRYSPIDYSDGSGMNLLQIQEKVWSQACLDACAPHLKEKLGSPVPSCSVVGAISSYYVQRYGFPPGCKVVAFTGDNPASLAGMRLEEGDVAVSLGTSDTLFLWLQKPMPALEGHIFCNPVDARQYMALLCFKNGSLMREKIRDESASCSWNKFSKALQSTEMGNNGNLGFYFDVMEITPEIIGCHRFNADNMEVSAFPGDVEIRALVEGQFMAKRIHAEGLGYRIMPKTKILATGGASHNKDILQVLADVFGAPVYVIDTTSSACVGSAYRAFHGLAGGTGVAFSEVVKSAPQPSLAATPNPGASQVYAALLPRYAELEQRILSKARGPLE.

4 residues coordinate substrate: His99, Arg170, Asp280, and Asn281. ATP is bound by residues Trp355, 441-442 (GA), and Asn445.

The protein belongs to the FGGY kinase family. In terms of assembly, monomer.

The enzyme catalyses D-xylulose + ATP = D-xylulose 5-phosphate + ADP + H(+). Phosphorylates D-xylulose to produce D-xylulose 5-phosphate, a molecule that may play an important role in the regulation of glucose metabolism and lipogenesis. The protein is Xylulose kinase (Xylb) of Rattus norvegicus (Rat).